A 409-amino-acid chain; its full sequence is Ubiquitin-associated domain-containing protein 1 (409 aa).

Met1 carries the post-translational modification N-acetylmethionine. A Ubiquitin-like domain is found at 14 to 98 (LRLHICAADG…LLLIKKRVPS (85 aa)). The interval 101 to 122 (PKMADVSAEEKKKQEQKAPDKD) is disordered. Over residues 108–122 (AEEKKKQEQKAPDKD) the composition is skewed to basic and acidic residues. Positions 187–231 (DEDERVDETALRQLTEMGFPESRASKALRLNHMSVPQAMEWLIEH) constitute a UBA 1 domain. The disordered stretch occupies residues 239–273 (TPLPGHAAQAGASAAATTSSTSSEAAVGTSVEDEE). Residues 245 to 268 (AAQAGASAAATTSSTSSEAAVGTS) show a composition bias toward low complexity. Positions 292 to 332 (RADARAVISLMEMGFDEKEVIDALRVNNNQQNAACEWLLGD) constitute a UBA 2 domain. In terms of domain architecture, STI1 spans 357–396 (NPVVQLGLTNPKTLLAFEDMLENPLNSTQWMNDPETGPVM).

Component of the KPC complex composed of RNF123/KPC1 and UBAC1/KPC2. Interacts (via ubiquitin-like domain) with RNF123. Interacts (via ubiquitin-like and UBA domains) with the proteasome via its N-terminal domain.

The protein localises to the cytoplasm. It participates in protein modification; protein ubiquitination. Functionally, non-catalytic component of the KPC complex, a E3 ubiquitin-protein ligase complex that mediates polyubiquitination of target proteins, such as CDKN1B and NFKB1. The KPC complex catalyzes polyubiquitination and proteasome-mediated degradation of CDKN1B during G1 phase of the cell cycle. The KPC complex also acts as a key regulator of the NF-kappa-B signaling by promoting maturation of the NFKB1 component of NF-kappa-B by catalyzing ubiquitination of the NFKB1 p105 precursor. Within the KPC complex, UBAC1 acts as an adapter that promotes the transfer of target proteins that have been polyubiquitinated by RNF123/KPC1 to the 26S proteasome. This is Ubiquitin-associated domain-containing protein 1 (Ubac1) from Mus musculus (Mouse).